The sequence spans 490 residues: Velvet complex subunit 2 (490 aa).

Disordered regions lie at residues L23–Q148 and Y295–P316. Positions P54–Q70 are enriched in basic residues. Over residues A112–D131 the composition is skewed to basic and acidic residues. The 311-residue stretch at A164 to R474 folds into the Velvet domain. Over residues Y295–T313 the composition is skewed to polar residues.

This sequence belongs to the velvet family. VelB subfamily. In terms of assembly, component of the heterotrimeric velvet complex composed of LAE1, VEL1 and VEL2; VEL1 acting as a bridging protein between LAE1 and VEL2. Forms a heterodimeric complex with VOS1; the formation of the VEL2-VOS1 complex is light-dependent.

Its subcellular location is the nucleus. The protein resides in the cytoplasm. Component of the velvet transcription factor complex that controls sexual/asexual developmental ratio in response to light, promoting sexual development in the darkness while stimulating asexual sporulation under illumination. The velvet complex acts as a global regulator for secondary metabolite gene expression. Component of the VEL2-VOS1 heterodimeric complex that plays a dual role in activating genes associated with spore maturation and repressing certain development-associated genes. The VEL2-VOS1 complex binds DNA through the DNA-binding domain of VOS1 that recognizes an 11-nucleotide consensus sequence 5'-CTGGCCGCGGC-3' consisting of two motifs in the promoters of key developmental regulatory genes. Regulates expression of cellulase-encoding genes such as the cellobiohydrolase-encoding genes cbh1 and cbh2, the endo-beta-1,4-glucanase-encoding genes egl1 and egl2, and the beta-glucosidase-encoding gene bgl1. The protein is Velvet complex subunit 2 of Hypocrea jecorina (strain QM6a) (Trichoderma reesei).